The sequence spans 331 residues: UDP-GalNAc:beta-1,3-N-acetylgalactosaminyltransferase 1 (331 aa).

Residues 1-20 lie on the Cytoplasmic side of the membrane; sequence MAPALPITLPSKMSLRSLKW. A helical; Signal-anchor for type II membrane protein transmembrane segment spans residues 21-43; the sequence is SLLLLSLLSFLVMWYLSLPHYNV. Residues 44 to 331 are Lumenal-facing; that stretch reads IERVNWMYFY…VMLRNTTCHY (288 aa). 5 N-linked (GlcNAc...) asparagine glycosylation sites follow: Asn72, Asn154, Asn198, Asn212, and Asn326.

Belongs to the glycosyltransferase 31 family. Mg(2+) is required as a cofactor.

Its subcellular location is the golgi apparatus membrane. It carries out the reaction a globoside Gb3Cer (d18:1(4E)) + UDP-N-acetyl-alpha-D-galactosamine = a globoside Gb4Cer (d18:1(4E)) + UDP + H(+). It functions in the pathway protein modification; protein glycosylation. Functionally, transfers N-acetylgalactosamine onto globotriaosylceramide. Plays a critical role in preimplantation stage embryonic development. This Sus scrofa (Pig) protein is UDP-GalNAc:beta-1,3-N-acetylgalactosaminyltransferase 1 (B3GALNT1).